A 189-amino-acid polypeptide reads, in one-letter code: Protein OXIDATIVE STRESS 3 LIKE 2 (189 aa).

Disordered stretches follow at residues 22–49 and 128–147; these read SSST…SSYN and AMSQ…LPTL. Residues 33-44 show a composition bias toward acidic residues; it reads NSDDDEGGENEI.

The protein localises to the nucleus. This chain is Protein OXIDATIVE STRESS 3 LIKE 2, found in Arabidopsis thaliana (Mouse-ear cress).